Reading from the N-terminus, the 225-residue chain is Membrane protein (225 aa).

Over 1 to 20 (MPNETNCTLDFEQSVQLFKE) the chain is Virion surface. The chain crosses the membrane as a helical span at residues 21–41 (YNLFITAFLLFLTIILQYGYA). Topologically, residues 42-51 (TRTKVIYTLK) are intravirion. Residues 52 to 72 (MIVLWCFWPLNIAVGVISCTY) form a helical membrane-spanning segment. At 73-77 (PPNTG) the chain is on the virion surface side. The helical transmembrane segment at 78–98 (GLVVAIILTVFACLSFVGYWI) threads the bilayer. At 99–225 (QSIRLFKRCR…VATGGSSLYT (127 aa)) the chain is on the intravirion side.

The protein belongs to the gammacoronaviruses M protein family. Homomultimer. Interacts with envelope E protein in the budding compartment of the host cell, which is located between endoplasmic reticulum and the Golgi complex. Forms a complex with HE and S proteins. Interacts with nucleocapsid N protein. This interaction probably participates in RNA packaging into the virus.

The protein resides in the virion membrane. It is found in the host Golgi apparatus membrane. Its function is as follows. Component of the viral envelope that plays a central role in virus morphogenesis and assembly via its interactions with other viral proteins. This is Membrane protein from Avian infectious bronchitis virus (strain Beaudette US) (IBV).